Consider the following 187-residue polypeptide: NADH-quinone oxidoreductase subunit B (187 aa).

[4Fe-4S] cluster contacts are provided by Cys-51, Cys-52, Cys-117, and Cys-149.

It belongs to the complex I 20 kDa subunit family. As to quaternary structure, NDH-1 is composed of 14 different subunits. Subunits NuoB, C, D, E, F, and G constitute the peripheral sector of the complex. [4Fe-4S] cluster serves as cofactor.

Its subcellular location is the cell inner membrane. The catalysed reaction is a quinone + NADH + 5 H(+)(in) = a quinol + NAD(+) + 4 H(+)(out). In terms of biological role, NDH-1 shuttles electrons from NADH, via FMN and iron-sulfur (Fe-S) centers, to quinones in the respiratory chain. The immediate electron acceptor for the enzyme in this species is believed to be ubiquinone. Couples the redox reaction to proton translocation (for every two electrons transferred, four hydrogen ions are translocated across the cytoplasmic membrane), and thus conserves the redox energy in a proton gradient. This is NADH-quinone oxidoreductase subunit B from Nitratidesulfovibrio vulgaris (strain DSM 19637 / Miyazaki F) (Desulfovibrio vulgaris).